The following is a 388-amino-acid chain: Meiotic driver wtf13 (388 aa).

Over residues 1-29 (MKNKDYPLRSSMDELSTKNDNEIDLEKGP) the composition is skewed to basic and acidic residues. The interval 1-39 (MKNKDYPLRSSMDELSTKNDNEIDLEKGPLPEYNSEDGS) is disordered. 9 helical membrane passes run 89–109 (LLIS…CVNP), 119–139 (AFSV…FCFF), 152–172 (VTVI…AQCV), 182–202 (CVKV…VGLY), 207–227 (DLVV…FGCV), 243–263 (CSIS…IWTL), 267–287 (LFGL…TKGL), 297–317 (ATGY…LFFY), and 331–351 (FIGN…GGIG).

The protein belongs to the WTF family. As to quaternary structure, homomer. Forms protein aggregates. The two isoforms can interact with each other and with themselves. High sequence similarity is required for their interaction.

It is found in the spore membrane. The protein resides in the vacuole membrane. The protein localises to the ascus epiplasm. It localises to the cytoplasm. Its subcellular location is the endoplasmic reticulum membrane. Functionally, promotes unequal transmission of alleles from the parental zygote to progeny spores by acting as poison/antidote system where the poison and antidote proteins are produced from the same locus; the poison component is trans-acting and targets all spores within an ascus whereas the antidote component is spore-specific, leading to poisoning of all progeny that do not inherit the allele. In terms of biological role, localizes isoform 2 to the vacuole thereby facilitating its degradation. In addition to suppressing isoform 2, also suppresses S.pombe strain FY29033 wtf18 isoform 2. Forms toxic aggregates that disrupt spore maturation. The protein is Meiotic driver wtf13 of Schizosaccharomyces pombe (strain 972 / ATCC 24843) (Fission yeast).